A 117-amino-acid polypeptide reads, in one-letter code: Protein OPG035 (117 aa).

It belongs to the poxviridae OPG035 family.

In terms of biological role, bcl-2-like protein which contributes to virulence by preventing host NF-kappa-B activation in response to pro-inflammatory stimuli such as TNF-alpha or IL1B. This Homo sapiens (Human) protein is Protein OPG035 (OPG035).